A 181-amino-acid chain; its full sequence is ATP synthase subunit delta (181 aa).

Belongs to the ATPase delta chain family. In terms of assembly, F-type ATPases have 2 components, F(1) - the catalytic core - and F(0) - the membrane proton channel. F(1) has five subunits: alpha(3), beta(3), gamma(1), delta(1), epsilon(1). F(0) has three main subunits: a(1), b(2) and c(10-14). The alpha and beta chains form an alternating ring which encloses part of the gamma chain. F(1) is attached to F(0) by a central stalk formed by the gamma and epsilon chains, while a peripheral stalk is formed by the delta and b chains.

The protein resides in the cell membrane. Its function is as follows. F(1)F(0) ATP synthase produces ATP from ADP in the presence of a proton or sodium gradient. F-type ATPases consist of two structural domains, F(1) containing the extramembraneous catalytic core and F(0) containing the membrane proton channel, linked together by a central stalk and a peripheral stalk. During catalysis, ATP synthesis in the catalytic domain of F(1) is coupled via a rotary mechanism of the central stalk subunits to proton translocation. In terms of biological role, this protein is part of the stalk that links CF(0) to CF(1). It either transmits conformational changes from CF(0) to CF(1) or is implicated in proton conduction. The protein is ATP synthase subunit delta of Clostridioides difficile (strain 630) (Peptoclostridium difficile).